The chain runs to 259 residues: Eukaryotic translation initiation factor 3 subunit G-2 (259 aa).

The RRM domain maps to 179-257; it reads SAVRISNLSE…LILSVEWSKP (79 aa).

This sequence belongs to the eIF-3 subunit G family. Component of the eukaryotic translation initiation factor 3 (eIF-3) complex. The eIF-3 complex interacts with pix.

The protein localises to the cytoplasm. Functionally, RNA-binding component of the eukaryotic translation initiation factor 3 (eIF-3) complex, which is involved in protein synthesis of a specialized repertoire of mRNAs and, together with other initiation factors, stimulates binding of mRNA and methionyl-tRNAi to the 40S ribosome. The eIF-3 complex specifically targets and initiates translation of a subset of mRNAs involved in cell proliferation. This subunit can bind 18S rRNA. The chain is Eukaryotic translation initiation factor 3 subunit G-2 from Drosophila mojavensis (Fruit fly).